The following is a 140-amino-acid chain: uncharacterized protein (140 aa).

This is an uncharacterized protein from Fowlpox virus (strain NVSL) (FPV).